Reading from the N-terminus, the 624-residue chain is Coagulation factor XI (624 aa).

Residues 1–18 (MTSLHQVLYFIFFASVSS) form the signal peptide. Apple domains are found at residues 20–103 (CVTK…FKQC), 110–193 (CSKD…LKSC), 200–283 (CIRD…LQHC), and 291–376 (CHPS…LRLC). Disulfide bonds link Cys-20-Cys-103, Cys-46-Cys-76, Cys-50-Cys-56, Cys-110-Cys-193, Cys-136-Cys-165, Cys-140-Cys-146, Cys-200-Cys-283, Cys-226-Cys-255, Cys-230-Cys-236, Cys-291-Cys-376, Cys-317-Cys-348, Cys-321-Cys-327, Cys-382-Cys-499, Cys-415-Cys-431, Cys-513-Cys-580, Cys-544-Cys-559, and Cys-570-Cys-598. Asn-90 and Asn-126 each carry an N-linked (GlcNAc...) asparagine glycan. A glycan (N-linked (GlcNAc...) asparagine) is linked at Asn-297. A Peptidase S1 domain is found at 390 to 622 (VVGGAASVHG…YVDWILEKTQ (233 aa)). His-430 (charge relay system) is an active-site residue. The N-linked (GlcNAc...) asparagine glycan is linked to Asn-449. The Charge relay system role is filled by Asp-479. The N-linked (GlcNAc...) asparagine glycan is linked to Asn-490. 547 to 550 (RYRR) is a binding site for heparin. The active-site Charge relay system is Ser-574.

This sequence belongs to the peptidase S1 family. Plasma kallikrein subfamily. In terms of assembly, homodimer; disulfide-linked. After activation the heavy and light chains are also linked by a disulfide bond. Interacts (activated) with F9 (inactive and activated) in calcium-dependent manner. Forms a heterodimer with SERPINA5. Activated by factor XIIa (or XII), which cleaves each polypeptide after Arg-389 into the light chain, which contains the active site, and the heavy chain, which associates with high molecular weight (HMW) kininogen. Activated by F12 (activated); the presence of negatively charged surfaces accelerates activation. Activated by F2 (thrombin); the presence of negatively charged surfaces, such as polyphosphate and dextran sulfate, strongly accelerates activation. Autoactivated; the presence of negatively charged surfaces, such as polyphosphate and dextran sulfate, accelerates autoactivation and autolysis. Post-translationally, N-glycosylated on both chains. N-glycosylated sites mainly consist of nonfucosylated sialylated biantennary (in high abundance) and/or triantennary (in low abundance) complex structures.

It localises to the secreted. The enzyme catalyses Selective cleavage of Arg-|-Ala and Arg-|-Val bonds in factor IX to form factor IXa.. Its activity is regulated as follows. Inhibited by SERPINA5. Functionally, factor XI triggers the middle phase of the intrinsic pathway of blood coagulation by activating factor IX. In Mus musculus (Mouse), this protein is Coagulation factor XI (F11).